The following is a 125-amino-acid chain: Small ribosomal subunit protein uS12 (125 aa).

3-methylthioaspartic acid is present on D89.

It belongs to the universal ribosomal protein uS12 family. As to quaternary structure, part of the 30S ribosomal subunit. Contacts proteins S8 and S17. May interact with IF1 in the 30S initiation complex.

Its function is as follows. With S4 and S5 plays an important role in translational accuracy. In terms of biological role, interacts with and stabilizes bases of the 16S rRNA that are involved in tRNA selection in the A site and with the mRNA backbone. Located at the interface of the 30S and 50S subunits, it traverses the body of the 30S subunit contacting proteins on the other side and probably holding the rRNA structure together. The combined cluster of proteins S8, S12 and S17 appears to hold together the shoulder and platform of the 30S subunit. This Bordetella petrii (strain ATCC BAA-461 / DSM 12804 / CCUG 43448) protein is Small ribosomal subunit protein uS12.